The chain runs to 356 residues: GTPase Obg (356 aa).

The Obg domain maps to 1–159 (MKFLDEAKVY…RWIWLRMKLI (159 aa)). The OBG-type G domain maps to 160 to 327 (ADAGLVGLPN…ALRKLADVVG (168 aa)). GTP is bound by residues 166-173 (GLPNAGKS), 191-195 (FTTLH), 212-215 (DIPG), 279-282 (NKID), and 308-310 (SGA). Mg(2+) contacts are provided by Ser-173 and Thr-193. A disordered region spans residues 327–356 (GEQPVSSKAKNAVESAATEEPWAAPVPPQG).

This sequence belongs to the TRAFAC class OBG-HflX-like GTPase superfamily. OBG GTPase family. Monomer. It depends on Mg(2+) as a cofactor.

It localises to the cytoplasm. Its function is as follows. An essential GTPase which binds GTP, GDP and possibly (p)ppGpp with moderate affinity, with high nucleotide exchange rates and a fairly low GTP hydrolysis rate. Plays a role in control of the cell cycle, stress response, ribosome biogenesis and in those bacteria that undergo differentiation, in morphogenesis control. The polypeptide is GTPase Obg (Bradyrhizobium sp. (strain ORS 278)).